The chain runs to 290 residues: Glycine--tRNA ligase alpha subunit (290 aa).

This sequence belongs to the class-II aminoacyl-tRNA synthetase family. Tetramer of two alpha and two beta subunits.

The protein resides in the cytoplasm. The catalysed reaction is tRNA(Gly) + glycine + ATP = glycyl-tRNA(Gly) + AMP + diphosphate. The sequence is that of Glycine--tRNA ligase alpha subunit from Zymomonas mobilis subsp. mobilis (strain ATCC 31821 / ZM4 / CP4).